A 362-amino-acid chain; its full sequence is Probable cinnamyl alcohol dehydrogenase 8D (362 aa).

Cys45 contacts Zn(2+). Thr47 contacts NADP(+). The Zn(2+) site is built by His67, Glu68, Cys98, Cys101, Cys104, Cys112, and Cys161. Residues Thr165, 186–191 (GLGGLG), 209–214 (SSSPAK), Thr249, Gly273, and 296–298 (NGV) contribute to the NADP(+) site.

This sequence belongs to the zinc-containing alcohol dehydrogenase family. In terms of assembly, homodimer. Zn(2+) serves as cofactor.

It carries out the reaction (E)-cinnamyl alcohol + NADP(+) = (E)-cinnamaldehyde + NADPH + H(+). The catalysed reaction is (E)-coniferol + NADP(+) = (E)-coniferaldehyde + NADPH + H(+). It catalyses the reaction (E)-sinapyl alcohol + NADP(+) = (E)-sinapaldehyde + NADPH + H(+). The enzyme catalyses (E)-4-coumaroyl alcohol + NADP(+) = (E)-4-coumaraldehyde + NADPH + H(+). It carries out the reaction (E)-caffeyl alcohol + NADP(+) = (E)-caffeyl aldehyde + NADPH + H(+). It functions in the pathway aromatic compound metabolism; phenylpropanoid biosynthesis. Functionally, involved in lignin biosynthesis. Catalyzes the final step specific for the production of lignin monomers. Catalyzes the NADPH-dependent reduction of coniferaldehyde, 5-hydroxyconiferaldehyde, sinapaldehyde, 4-coumaraldehyde and caffeyl aldehyde to their respective alcohols. This is Probable cinnamyl alcohol dehydrogenase 8D from Oryza sativa subsp. japonica (Rice).